The chain runs to 361 residues: tRNA 2-selenouridine synthase (361 aa).

In terms of domain architecture, Rhodanese spans 11-134 (LLADTPLIDV…LRQTAIQATW (124 aa)). The active-site S-selanylcysteine intermediate is Cys94.

It belongs to the SelU family. As to quaternary structure, monomer.

The enzyme catalyses 5-methylaminomethyl-2-thiouridine(34) in tRNA + selenophosphate + (2E)-geranyl diphosphate + H2O + H(+) = 5-methylaminomethyl-2-selenouridine(34) in tRNA + (2E)-thiogeraniol + phosphate + diphosphate. It catalyses the reaction 5-methylaminomethyl-2-thiouridine(34) in tRNA + (2E)-geranyl diphosphate = 5-methylaminomethyl-S-(2E)-geranyl-thiouridine(34) in tRNA + diphosphate. The catalysed reaction is 5-methylaminomethyl-S-(2E)-geranyl-thiouridine(34) in tRNA + selenophosphate + H(+) = 5-methylaminomethyl-2-(Se-phospho)selenouridine(34) in tRNA + (2E)-thiogeraniol. It carries out the reaction 5-methylaminomethyl-2-(Se-phospho)selenouridine(34) in tRNA + H2O = 5-methylaminomethyl-2-selenouridine(34) in tRNA + phosphate. In terms of biological role, involved in the post-transcriptional modification of the uridine at the wobble position (U34) of tRNA(Lys), tRNA(Glu) and tRNA(Gln). Catalyzes the conversion of 2-thiouridine (S2U-RNA) to 2-selenouridine (Se2U-RNA). Acts in a two-step process involving geranylation of 2-thiouridine (S2U) to S-geranyl-2-thiouridine (geS2U) and subsequent selenation of the latter derivative to 2-selenouridine (Se2U) in the tRNA chain. This is tRNA 2-selenouridine synthase from Salmonella schwarzengrund (strain CVM19633).